The following is a 691-amino-acid chain: Methionine--tRNA ligase (691 aa).

The short motif at 14-24 is the 'HIGH' region element; sequence PYANGPFHLGH. Residues cysteine 148, cysteine 151, cysteine 161, and cysteine 164 each coordinate Zn(2+). The 'KMSKS' region signature appears at 344–348; the sequence is KMSKS. Lysine 347 provides a ligand contact to ATP. In terms of domain architecture, tRNA-binding spans 585 to 691; the sequence is DFDRVDLRVA…PGAKPGMRVR (107 aa).

Belongs to the class-I aminoacyl-tRNA synthetase family. MetG type 1 subfamily. Homodimer. The cofactor is Zn(2+).

The protein localises to the cytoplasm. The enzyme catalyses tRNA(Met) + L-methionine + ATP = L-methionyl-tRNA(Met) + AMP + diphosphate. Functionally, is required not only for elongation of protein synthesis but also for the initiation of all mRNA translation through initiator tRNA(fMet) aminoacylation. This is Methionine--tRNA ligase from Verminephrobacter eiseniae (strain EF01-2).